The sequence spans 155 residues: Probable calcium-binding protein CML9 (155 aa).

3 consecutive EF-hand domains span residues 8–43 (EQVD…LGQN), 86–121 (ATEK…HGDR), and 122–155 (LTEE…MNNK). Residues D21, D23, D25, R27, and E32 each coordinate Ca(2+).

Functionally, potential calcium sensor. The protein is Probable calcium-binding protein CML9 (CML9) of Oryza sativa subsp. japonica (Rice).